A 414-amino-acid chain; its full sequence is MTTQRSPGLFRRLAHGSLVKQILVGLVLGILLAWISKPAAEAVGLLGTLFVGALKAVAPILVLMLVMASIANHQHGQKTNIRPILFLYLLGTFSAALAAVVFSFAFPSTLHLSSSAGDISPPSGIVEVMRGLVMSMVSNPIDALLKGNYIGILVWAIGLGFALRHGNETTKNLVNDLSNAVTFMVKLVIRFAPIGIFGLVSSTLATTGFSTLWGYAQLLVVLVGCMLLVALVVNPLLVWWKIRRNPFPLVLLCLRESGVYAFFTRSSAANIPVNMALCEKLNLDRDTYSVSIPLGATINMAGAAITITVLTLAAVNTLGIPVDLPTALLLSVVASLCACGASGVAGGSLLLIPLACNMFGISNDIAMQVVAVGFIIGVLQDSCETALNSSTDVLFTAAACQAEDDRLANSALRN.

The Cytoplasmic segment spans residues 2 to 15 (TTQRSPGLFRRLAH). The helical transmembrane segment at 16–36 (GSLVKQILVGLVLGILLAWIS) threads the bilayer. The Periplasmic segment spans residues 37 to 45 (KPAAEAVGL). The chain crosses the membrane as a helical span at residues 46–66 (LGTLFVGALKAVAPILVLMLV). Residues 67 to 83 (MASIANHQHGQKTNIRP) lie on the Cytoplasmic side of the membrane. A helical membrane pass occupies residues 84 to 104 (ILFLYLLGTFSAALAAVVFSF). Residues 105–142 (AFPSTLHLSSSAGDISPPSGIVEVMRGLVMSMVSNPID) lie on the Periplasmic side of the membrane. A helical membrane pass occupies residues 143-163 (ALLKGNYIGILVWAIGLGFAL). At 164-179 (RHGNETTKNLVNDLSN) the chain is on the cytoplasmic side. The helical transmembrane segment at 180 to 200 (AVTFMVKLVIRFAPIGIFGLV) threads the bilayer. Residues 201–217 (SSTLATTGFSTLWGYAQ) lie on the Periplasmic side of the membrane. Residues 218 to 238 (LLVVLVGCMLLVALVVNPLLV) form a helical membrane-spanning segment. Residues 239 to 299 (WWKIRRNPFP…VSIPLGATIN (61 aa)) are Cytoplasmic-facing. The chain crosses the membrane as a helical span at residues 300-320 (MAGAAITITVLTLAAVNTLGI). At 321–331 (PVDLPTALLLS) the chain is on the periplasmic side. Residues 332 to 352 (VVASLCACGASGVAGGSLLLI) form a helical membrane-spanning segment. At 353–414 (PLACNMFGIS…DRLANSALRN (62 aa)) the chain is on the cytoplasmic side.

The protein belongs to the dicarboxylate/amino acid:cation symporter (DAACS) (TC 2.A.23) family.

It is found in the cell inner membrane. It catalyses the reaction L-serine(in) + Na(+)(in) = L-serine(out) + Na(+)(out). It carries out the reaction L-threonine(in) + Na(+)(in) = L-threonine(out) + Na(+)(out). In terms of biological role, involved in the import of serine and threonine into the cell, with the concomitant import of sodium (symport system). This is Serine/threonine transporter SstT from Shigella boydii serotype 4 (strain Sb227).